The chain runs to 239 residues: Ribonuclease PH (239 aa).

Residues arginine 86 and 124 to 126 (GTR) each bind phosphate.

Belongs to the RNase PH family. In terms of assembly, homohexameric ring arranged as a trimer of dimers.

The catalysed reaction is tRNA(n+1) + phosphate = tRNA(n) + a ribonucleoside 5'-diphosphate. Its function is as follows. Phosphorolytic 3'-5' exoribonuclease that plays an important role in tRNA 3'-end maturation. Removes nucleotide residues following the 3'-CCA terminus of tRNAs; can also add nucleotides to the ends of RNA molecules by using nucleoside diphosphates as substrates, but this may not be physiologically important. Probably plays a role in initiation of 16S rRNA degradation (leading to ribosome degradation) during starvation. This chain is Ribonuclease PH, found in Rhizobium leguminosarum bv. trifolii (strain WSM2304).